Reading from the N-terminus, the 241-residue chain is Ribose-5-phosphate isomerase A (241 aa).

Substrate contacts are provided by residues 29 to 32 (TGTT), 84 to 87 (DGAD), and 97 to 100 (KGGG). Glu-106 serves as the catalytic Proton acceptor. Lys-124 provides a ligand contact to substrate.

Belongs to the ribose 5-phosphate isomerase family. In terms of assembly, homodimer.

The catalysed reaction is aldehydo-D-ribose 5-phosphate = D-ribulose 5-phosphate. The protein operates within carbohydrate degradation; pentose phosphate pathway; D-ribose 5-phosphate from D-ribulose 5-phosphate (non-oxidative stage): step 1/1. Functionally, catalyzes the reversible conversion of ribose-5-phosphate to ribulose 5-phosphate. The polypeptide is Ribose-5-phosphate isomerase A (Thermoplasma volcanium (strain ATCC 51530 / DSM 4299 / JCM 9571 / NBRC 15438 / GSS1)).